Here is a 420-residue protein sequence, read N- to C-terminus: Dihydrolipoyllysine-residue succinyltransferase component of 2-oxoglutarate dehydrogenase complex (420 aa).

In terms of domain architecture, Lipoyl-binding spans 1–76 (MAEVKVPELA…EVGQAVAVVG (76 aa)). Position 42 is an N6-lipoyllysine (Lys42). A disordered region spans residues 75–201 (VGEGQVNTSN…EKMSRRKKTA (127 aa)). Polar residues predominate over residues 81–90 (NTSNDSSNES). Over residues 91–102 (SQKDEAKEKETP) the composition is skewed to basic and acidic residues. Residues 103–127 (KQSNPNSSESENTQDNSQQRINATP) are compositionally biased toward polar residues. The region spanning 124 to 160 (NATPSARRHARKNGVDLSEVSGKGNDVLRKDDVENSQ) is the Peripheral subunit-binding (PSBD) domain. Over residues 149–158 (DVLRKDDVEN) the composition is skewed to basic and acidic residues. The span at 159–188 (SQKSSSQTAKSESKSQNSGSKQSNNNPSKP) shows a compositional bias: low complexity. Active-site residues include His391 and Asp395.

This sequence belongs to the 2-oxoacid dehydrogenase family. In terms of assembly, forms a 24-polypeptide structural core with octahedral symmetry. Part of the 2-oxoglutarate dehydrogenase (OGDH) complex composed of E1 (2-oxoglutarate dehydrogenase), E2 (dihydrolipoamide succinyltransferase) and E3 (dihydrolipoamide dehydrogenase); the complex contains multiple copies of the three enzymatic components (E1, E2 and E3). It depends on (R)-lipoate as a cofactor.

The enzyme catalyses N(6)-[(R)-dihydrolipoyl]-L-lysyl-[protein] + succinyl-CoA = N(6)-[(R)-S(8)-succinyldihydrolipoyl]-L-lysyl-[protein] + CoA. Its pathway is amino-acid degradation; L-lysine degradation via saccharopine pathway; glutaryl-CoA from L-lysine: step 6/6. Its function is as follows. E2 component of the 2-oxoglutarate dehydrogenase (OGDH) complex which catalyzes the second step in the conversion of 2-oxoglutarate to succinyl-CoA and CO(2). The protein is Dihydrolipoyllysine-residue succinyltransferase component of 2-oxoglutarate dehydrogenase complex (odhB) of Staphylococcus epidermidis (strain ATCC 12228 / FDA PCI 1200).